Consider the following 547-residue polypeptide: Isoflavonoid 7-O-beta-apiosyl-glucoside beta-glycosidase (547 aa).

The first 31 residues, 1–31, serve as a signal peptide directing secretion; it reads MHAMTFKAILLLGLLALVSTSASIAFAKEVR. Gln59 is an a beta-D-glucoside binding site. Residues Asn72 and Asn132 are each glycosylated (N-linked (GlcNAc...) asparagine). Residue His159 coordinates a beta-D-glucoside. Asn175 carries an N-linked (GlcNAc...) asparagine glycan. A beta-D-glucoside is bound at residue 204-205; sequence NE. Catalysis depends on Glu205, which acts as the Proton donor. A disulfide bridge links Cys224 with Cys232. An N-linked (GlcNAc...) asparagine glycan is attached at Asn285. A beta-D-glucoside-binding positions include Tyr348, Glu419, Trp468, 475–476, and Phe484; that span reads EW. The Nucleophile role is filled by Glu419. N-linked (GlcNAc...) asparagine glycosylation occurs at Asn490.

This sequence belongs to the glycosyl hydrolase 1 family. Homotetramer.

The enzyme catalyses 7-[beta-D-apiofuranosyl-(1-&gt;6)-beta-D-glucopyranosyloxy]isoflavonoid + H2O = a 7-hydroxyisoflavonoid + beta-D-apiofuranosyl-(1-&gt;6)-D-glucose.. Its activity is regulated as follows. Not inhibited by iron, calcium, mercury, manganese, zinc or EDTA. Functionally, hydrolyzes dalpatein 7-O-beta-D-apiofuranosyl-(1-&gt;6)-beta-D-glucopyranoside and dalnigrein 7-O-beta-D-apiofuranosyl-(1-&gt;6)-beta-D-glucopyranoside. Also has activity towards pNP-beta-D-fucoside and pNP-beta-D-glucoside, but not pNP-beta-cellobioside. This is Isoflavonoid 7-O-beta-apiosyl-glucoside beta-glycosidase from Dalbergia nigrescens (Thai blackwood).